Here is an 88-residue protein sequence, read N- to C-terminus: DNA-directed RNA polymerase subunit omega (88 aa).

The protein belongs to the RNA polymerase subunit omega family. The RNAP catalytic core consists of 2 alpha, 1 beta, 1 beta' and 1 omega subunit. When a sigma factor is associated with the core the holoenzyme is formed, which can initiate transcription.

The catalysed reaction is RNA(n) + a ribonucleoside 5'-triphosphate = RNA(n+1) + diphosphate. Its function is as follows. Promotes RNA polymerase assembly. Latches the N- and C-terminal regions of the beta' subunit thereby facilitating its interaction with the beta and alpha subunits. The polypeptide is DNA-directed RNA polymerase subunit omega (Anaeromyxobacter dehalogenans (strain 2CP-1 / ATCC BAA-258)).